Consider the following 248-residue polypeptide: UPF0246 protein MYPE6270 (248 aa).

The protein belongs to the UPF0246 family.

This Malacoplasma penetrans (strain HF-2) (Mycoplasma penetrans) protein is UPF0246 protein MYPE6270.